The primary structure comprises 71 residues: Protein CYSTEINE-RICH TRANSMEMBRANE MODULE 4 (71 aa).

Residues 1–12 (MSQYSQNQSSGA) show a composition bias toward polar residues. Residues 1 to 31 (MSQYSQNQSSGAYPTPPVSTGPYMTPPPLGY) are disordered. Residues 14–30 (PTPPVSTGPYMTPPPLG) are compositionally biased toward pro residues. Residues 48–64 (SKGDGFLKGCLAAMCCC) traverse the membrane as a helical segment.

The protein belongs to the CYSTM1 family. As to quaternary structure, heterodimers. Interacts with CYSTM6, CYSTM7, CYSTM12 and WIH1/CYSTM13. In terms of tissue distribution, mostly expressed in roots, stems, rosette leaves and siliques and, to a lower extent, in flowers and cauline leaves.

Its subcellular location is the cell membrane. It is found in the cytoplasm. In terms of biological role, involved in resistance to abiotic stress. This Arabidopsis thaliana (Mouse-ear cress) protein is Protein CYSTEINE-RICH TRANSMEMBRANE MODULE 4.